A 95-amino-acid polypeptide reads, in one-letter code: MVAYEKSPIVFLFATMMLVMFLFCGSGEARTLGYGSIKGDRIPACGYKNPNSCVKQPVNHYHRGCEKITRCARDAARYTESFNVDDDESPIINLH.

A signal peptide spans 1–29 (MVAYEKSPIVFLFATMMLVMFLFCGSGEA). 2 cysteine pairs are disulfide-bonded: C45–C53 and C65–C71.

It belongs to the plant rapid alkalinization factor (RALF) family.

The protein resides in the secreted. In terms of biological role, cell signaling peptide that may regulate plant stress, growth, and development. Mediates a rapid alkalinization of extracellular space by mediating a transient increase in the cytoplasmic Ca(2+) concentration leading to a calcium-dependent signaling events through a cell surface receptor and a concomitant activation of some intracellular mitogen-activated protein kinases. This Arabidopsis thaliana (Mouse-ear cress) protein is Protein RALF-like 16 (RALFL16).